We begin with the raw amino-acid sequence, 433 residues long: Bifunctional urease accessory protein UreEF (433 aa).

Positions 1–200 (MKIANTFIKR…VMATAASTAS (200 aa)) are urease accessory protein UreE. The urease accessory protein UreF stretch occupies residues 200–433 (SMTPSLDAGQ…ETQFSRLFRS (234 aa)).

The protein in the N-terminal section; belongs to the UreE family. This sequence in the C-terminal section; belongs to the UreF family. In terms of assembly, ureD, UreF and UreG form a complex that acts as a GTP-hydrolysis-dependent molecular chaperone, activating the urease apoprotein by helping to assemble the nickel containing metallocenter of UreC. The UreE protein probably delivers the nickel.

The protein localises to the cytoplasm. Functionally, involved in urease metallocenter assembly. Binds nickel. Probably functions as a nickel donor during metallocenter assembly. Required for maturation of urease via the functional incorporation of the urease nickel metallocenter. In Bordetella bronchiseptica (Alcaligenes bronchisepticus), this protein is Bifunctional urease accessory protein UreEF (ureEF).